We begin with the raw amino-acid sequence, 152 residues long: Protein-export protein SecB (152 aa).

The protein belongs to the SecB family. Homotetramer, a dimer of dimers. One homotetramer interacts with 1 SecA dimer.

It localises to the cytoplasm. In terms of biological role, one of the proteins required for the normal export of preproteins out of the cell cytoplasm. It is a molecular chaperone that binds to a subset of precursor proteins, maintaining them in a translocation-competent state. It also specifically binds to its receptor SecA. The sequence is that of Protein-export protein SecB from Verminephrobacter eiseniae (strain EF01-2).